A 557-amino-acid polypeptide reads, in one-letter code: TBCC domain-containing protein 1 (557 aa).

Residues 290–435 (TTKRAKIACN…LEDHMARTGL (146 aa)) enclose the C-CAP/cofactor C-like domain.

This sequence belongs to the TBCC family.

It localises to the cytoplasm. The protein resides in the cytoskeleton. Its subcellular location is the microtubule organizing center. It is found in the centrosome. The protein localises to the spindle pole. Plays a role in the regulation of centrosome and Golgi apparatus positioning, with consequences on cell shape and cell migration. The polypeptide is TBCC domain-containing protein 1 (TBCCD1) (Bos taurus (Bovine)).